A 222-amino-acid chain; its full sequence is Riboflavin kinase (222 aa).

The segment at 1-92 (MVEAEDLQSL…VRIFNPDQRG (92 aa)) is unknown. A riboflavin kinase region spans residues 93–222 (YTLTGTVISG…DTIEVEITHD (130 aa)). Position 102 to 107 (102 to 107 (GLGEGR)) interacts with CDP. Mg(2+) is bound by residues Thr131 and Asn133. Thr188 and Glu196 together coordinate FMN. Position 201-204 (201-204 (CELR)) interacts with CDP.

It belongs to the archaeal riboflavin kinase family. Mg(2+) is required as a cofactor.

The catalysed reaction is riboflavin + CTP = CDP + FMN + H(+). It participates in cofactor biosynthesis; FMN biosynthesis; FMN from riboflavin (CTP route): step 1/1. Catalyzes the CTP-dependent phosphorylation of riboflavin (vitamin B2) to form flavin mononucleotide (FMN). In Methanoculleus marisnigri (strain ATCC 35101 / DSM 1498 / JR1), this protein is Riboflavin kinase (ribK).